A 191-amino-acid polypeptide reads, in one-letter code: Molybdenum cofactor guanylyltransferase (191 aa).

GTP is bound by residues 11-13, Lys23, Asp66, and Asp97; that span reads LCG. Asp97 contributes to the Mg(2+) binding site.

It belongs to the MobA family. Monomer. Requires Mg(2+) as cofactor.

The protein localises to the cytoplasm. The enzyme catalyses Mo-molybdopterin + GTP + H(+) = Mo-molybdopterin guanine dinucleotide + diphosphate. Its function is as follows. Transfers a GMP moiety from GTP to Mo-molybdopterin (Mo-MPT) cofactor (Moco or molybdenum cofactor) to form Mo-molybdopterin guanine dinucleotide (Mo-MGD) cofactor. This Campylobacter jejuni subsp. doylei (strain ATCC BAA-1458 / RM4099 / 269.97) protein is Molybdenum cofactor guanylyltransferase.